The following is a 314-amino-acid chain: Elongator complex protein 5 (314 aa).

The protein belongs to the ELP5 family. Component of the elongator complex.

Its subcellular location is the cytoplasm. It is found in the nucleus. The protein operates within tRNA modification; 5-methoxycarbonylmethyl-2-thiouridine-tRNA biosynthesis. Its function is as follows. Component of the elongator complex, a multiprotein complex which is required for multiple tRNA modifications, including mcm5U (5-methoxycarbonylmethyl uridine), mcm5s2U (5-methoxycarbonylmethyl-2-thiouridine), and ncm5U (5-carbamoylmethyl uridine). The elongator complex catalyzes formation of carboxymethyluridine in the wobble base at position 34 in tRNAs. The polypeptide is Elongator complex protein 5 (iki1) (Schizosaccharomyces pombe (strain 972 / ATCC 24843) (Fission yeast)).